The chain runs to 217 residues: Small ribosomal subunit protein uS3 (217 aa).

The KH type-2 domain occupies isoleucine 38 to lysine 106.

It belongs to the universal ribosomal protein uS3 family. In terms of assembly, part of the 30S ribosomal subunit. Forms a tight complex with proteins S10 and S14.

In terms of biological role, binds the lower part of the 30S subunit head. Binds mRNA in the 70S ribosome, positioning it for translation. The polypeptide is Small ribosomal subunit protein uS3 (Streptococcus pneumoniae serotype 19F (strain G54)).